Reading from the N-terminus, the 319-residue chain is MARAPRSPHPARSRETSRAHPPYGTRADRAPGRGRDRDRSPDSPGNTSSRDGGRSPDRARRELSQNFLARRAVAERVARLVRPAPGGLLLEVGAGRGVLTEALAPYCGRLVAHEIDPRLLPALRDRFGGPHHAHVRISGGDFLAAPVPREPFALAGNIPYSRTAGIVDWALRARTLTSATFVTQLEYARKRTGDYGRWSLLTVRTWPRHEWRLLGRVSRREFRPVPRVDSGILRIERRERPLLPSAALGDYHRMVELGFSGVGGSLYASLRRAHRAGPLDAAFRAARLDRSVVVAYVTPEQWLTVFRTLRPVRSRPAGR.

A disordered region spans residues 1-59; the sequence is MARAPRSPHPARSRETSRAHPPYGTRADRAPGRGRDRDRSPDSPGNTSSRDGGRSPDRA. A compositionally biased stretch (basic and acidic residues) spans 26 to 41; that stretch reads RADRAPGRGRDRDRSP. 6 residues coordinate S-adenosyl-L-methionine: N66, L68, G93, E114, D141, and N157.

This sequence belongs to the class I-like SAM-binding methyltransferase superfamily. rRNA adenine N(6)-methyltransferase family.

It carries out the reaction adenosine(2085) in 23S rRNA + 2 S-adenosyl-L-methionine = N(6)-dimethyladenosine(2085) in 23S rRNA + 2 S-adenosyl-L-homocysteine + 2 H(+). In terms of biological role, this protein produces a dimethylation of the adenine residue at position 2085 in 23S rRNA, resulting in reduced affinity between ribosomes and macrolide-lincosamide-streptogramin B antibiotics. The polypeptide is rRNA adenine N-6-methyltransferase (ermSF) (Streptomyces fradiae (Streptomyces roseoflavus)).